Reading from the N-terminus, the 467-residue chain is MGQKFWENQEDRAMVESTIGSEACDFFISTASASNTALSKLVSPPSDSNLQQGLRHVVEGSDWDYALFWLASNVNSSDGCVLIWGDGHCRVKKGASGEDYSQQDEIKRRVLRKLHLSFVGSDEDHRLVKSGALTDLDMFYLASLYFSFRCDTNKYGPAGTYVSGKPLWAADLPSCLSYYRVRSFLARSAGFQTVLSVPVNSGVVELGSLRHIPEDKSVIEMVKSVFGGSDFVQAKEAPKIFGRQLSLGGAKPRSMSINFSPKTEDDTGFSLESYEVQAIGGSNQVYGYEQGKDETLYLTDEQKPRKRGRKPANGREEALNHVEAERQRREKLNQRFYALRAVVPNISKMDKASLLADAITYITDMQKKIRVYETEKQIMKRRESNQITPAEVDYQQRHDDAVVRLSCPLETHPVSKVIQTLRENEVMPHDSNVAITEEGVVHTFTLRPQGGCTAEQLKDKLLASLSQ.

The region spanning E316–M365 is the bHLH domain.

Homodimer.

The protein resides in the nucleus. The polypeptide is Transcription factor bHLH3 (BHLH3) (Arabidopsis thaliana (Mouse-ear cress)).